Here is a 167-residue protein sequence, read N- to C-terminus: 2-C-methyl-D-erythritol 2,4-cyclodiphosphate synthase (167 aa).

Residues Asp9 and His11 each coordinate a divalent metal cation. 4-CDP-2-C-methyl-D-erythritol 2-phosphate is bound by residues 9-11 (DVH) and 35-36 (HS). Residue His43 coordinates a divalent metal cation. Residues 57–59 (DIG), 62–66 (FPDTD), 133–136 (TTTE), Phe140, and Arg143 each bind 4-CDP-2-C-methyl-D-erythritol 2-phosphate.

It belongs to the IspF family. As to quaternary structure, homotrimer. A divalent metal cation is required as a cofactor.

It catalyses the reaction 4-CDP-2-C-methyl-D-erythritol 2-phosphate = 2-C-methyl-D-erythritol 2,4-cyclic diphosphate + CMP. It functions in the pathway isoprenoid biosynthesis; isopentenyl diphosphate biosynthesis via DXP pathway; isopentenyl diphosphate from 1-deoxy-D-xylulose 5-phosphate: step 4/6. Involved in the biosynthesis of isopentenyl diphosphate (IPP) and dimethylallyl diphosphate (DMAPP), two major building blocks of isoprenoid compounds. Catalyzes the conversion of 4-diphosphocytidyl-2-C-methyl-D-erythritol 2-phosphate (CDP-ME2P) to 2-C-methyl-D-erythritol 2,4-cyclodiphosphate (ME-CPP) with a corresponding release of cytidine 5-monophosphate (CMP). The sequence is that of 2-C-methyl-D-erythritol 2,4-cyclodiphosphate synthase from Glaesserella parasuis serovar 5 (strain SH0165) (Haemophilus parasuis).